Reading from the N-terminus, the 23-residue chain is Conolysin-Mt1 (23 aa).

The residue at position 22 (Ser22) is a Serine amide.

In terms of tissue distribution, expressed by the venom duct.

The protein resides in the secreted. Functionally, this cytolytic peptide has ability to disrupt the integrity of cell membranes from both prokaryotes and eukaryotes. It permeabilizes both negatively charged prokaryotic (PE:PG) and zwitterionic eukaryotic (PC:cholesterol) model membranes. It has potent hemolytic activity on human erythrocytes and exhibits low antimicrobial activity against the Gram-negative bacterium E.coli (MIC&gt;50 uM) and the Gram-positive bacterium S.aureus (MIC=25-50 uM). Intracranial injection causes mice to shuffle backward until the encounter an obstacle, at which time the mouse jump into the air. The backward shuffle is reminiscent to the signature dance 'moonwalk' that gained widespread popularity after being performed by Michael Jackson. This is Conolysin-Mt1 from Conus mustelinus (Weasel cone).